A 410-amino-acid chain; its full sequence is Peptidase T (410 aa).

Histidine 79 lines the Zn(2+) pocket. Residue aspartate 81 is part of the active site. Aspartate 142 serves as a coordination point for Zn(2+). The Proton acceptor role is filled by glutamate 176. Zn(2+)-binding residues include glutamate 177, aspartate 199, and histidine 381.

It belongs to the peptidase M20B family. Zn(2+) serves as cofactor.

Its subcellular location is the cytoplasm. It carries out the reaction Release of the N-terminal residue from a tripeptide.. In terms of biological role, cleaves the N-terminal amino acid of tripeptides. In Bacillus cereus (strain B4264), this protein is Peptidase T.